The primary structure comprises 150 residues: MTSQPHLHQHAAEIQEFGTVTQLPIALSHDARQYSCQRLNRVLADTQFLYALYKKCHWGMRGPTAYQLHLLFDKHAQEQLELVDALAERVQTLGGVAVGDPRHAARITGVPRPPDGIEDVHSMLSRLLDAHETILADVRDAATRVAGLGD.

The protein belongs to the Dps family.

This is an uncharacterized protein from Kitasatospora aureofaciens (Streptomyces aureofaciens).